A 307-amino-acid polypeptide reads, in one-letter code: Mitochondrial glycine transporter YMC1 (307 aa).

Solcar repeat units follow at residues 26-106 (VKDL…MKRF), 121-204 (PQYY…LIAN), and 218-305 (PAWK…AMRL). 6 helical membrane passes run 29-49 (LLAG…FDTT), 83-103 (LTPL…NEAM), 118-138 (LSLP…SFLA), 183-203 (TILR…ALIA), 223-243 (CIFG…LDVI), and 277-298 (FFKG…TFAT).

Belongs to the mitochondrial carrier (TC 2.A.29) family.

The protein localises to the mitochondrion inner membrane. Secondary mitochondrial glycine transporter required for the biosynthesis of heme at high glycine concentrations. Imports the precursor glycine into the mitochondrial matrix, where it is condensed with succinyl-CoA to produce 5-aminolevulinate (ALA), the first step of heme biosynthesis. In Saccharomyces cerevisiae (strain ATCC 204508 / S288c) (Baker's yeast), this protein is Mitochondrial glycine transporter YMC1.